The following is a 98-amino-acid chain: MSQNQDRKDNDVITLVDDEGNETLFNILFTFDSEDFGHSYILLYPADAAADDEVDIQAYIFNPEDGDNGELQLIESDDEWDMVEQVLNTFLADDGGMQ.

This sequence belongs to the UPF0473 family.

The chain is UPF0473 protein lp_2273 from Lactiplantibacillus plantarum (strain ATCC BAA-793 / NCIMB 8826 / WCFS1) (Lactobacillus plantarum).